Consider the following 166-residue polypeptide: Large ribosomal subunit protein uL10 (166 aa).

It belongs to the universal ribosomal protein uL10 family. As to quaternary structure, part of the ribosomal stalk of the 50S ribosomal subunit. The N-terminus interacts with L11 and the large rRNA to form the base of the stalk. The C-terminus forms an elongated spine to which L12 dimers bind in a sequential fashion forming a multimeric L10(L12)X complex.

Its function is as follows. Forms part of the ribosomal stalk, playing a central role in the interaction of the ribosome with GTP-bound translation factors. The chain is Large ribosomal subunit protein uL10 from Enterococcus faecalis (strain ATCC 700802 / V583).